The primary structure comprises 110 residues: uncharacterized protein (110 aa).

In terms of biological role, may play a regulatory role in sulfomenaquinone (SMK) biosynthesis. This is an uncharacterized protein from Mycobacterium bovis (strain ATCC BAA-935 / AF2122/97).